The chain runs to 420 residues: Serine--tRNA ligase (420 aa).

An L-serine-binding site is contributed by Thr228–Glu230. Arg259–Glu261 contacts ATP. L-serine is bound at residue Glu282. ATP is bound at residue Glu346–Ser349. L-serine is bound at residue Ser382.

Belongs to the class-II aminoacyl-tRNA synthetase family. Type-1 seryl-tRNA synthetase subfamily. Homodimer. The tRNA molecule binds across the dimer.

It localises to the cytoplasm. The catalysed reaction is tRNA(Ser) + L-serine + ATP = L-seryl-tRNA(Ser) + AMP + diphosphate + H(+). It catalyses the reaction tRNA(Sec) + L-serine + ATP = L-seryl-tRNA(Sec) + AMP + diphosphate + H(+). Its pathway is aminoacyl-tRNA biosynthesis; selenocysteinyl-tRNA(Sec) biosynthesis; L-seryl-tRNA(Sec) from L-serine and tRNA(Sec): step 1/1. Catalyzes the attachment of serine to tRNA(Ser). Is also able to aminoacylate tRNA(Sec) with serine, to form the misacylated tRNA L-seryl-tRNA(Sec), which will be further converted into selenocysteinyl-tRNA(Sec). This chain is Serine--tRNA ligase, found in Mycoplasmoides gallisepticum (strain R(low / passage 15 / clone 2)) (Mycoplasma gallisepticum).